A 504-amino-acid polypeptide reads, in one-letter code: Chorion-specific transcription factor GCMb (504 aa).

The segment at residues 19-174 is a DNA-binding region (GCM); that stretch reads LTWDINDPQM…KSETEGRRSA (156 aa). 8 residues coordinate Zn(2+): C81, C87, C91, C118, C121, C130, H157, and H159. 2 stretches are compositionally biased toward basic and acidic residues: residues 155–172 and 188–203; these read GVHD…EGRR and RRSE…DIRG. A disordered region spans residues 155 to 203; that stretch reads GVHDHPRPESKSETEGRRSALKRQMASFYQPQKRRSEEPEARSTQDIRG. The interval 379 to 393 is C-terminal conserved inhibitory domain (CCID); it reads LQTVITTTVAYQAYQ. The segment at 438-472 is disordered; sequence ASPSGRAPLKVPGDCQAPRPTLDFPQEADPSGTDG.

The protein resides in the nucleus. Transcription factor that binds specific sequences on gene promoters and activate their transcription. Through the regulation of gene transcription, may play a role in parathyroid gland development. The chain is Chorion-specific transcription factor GCMb from Mus musculus (Mouse).